The sequence spans 211 residues: V-type ATP synthase subunit D (211 aa).

Belongs to the V-ATPase D subunit family.

Produces ATP from ADP in the presence of a proton gradient across the membrane. The protein is V-type ATP synthase subunit D of Enterococcus faecalis (strain ATCC 700802 / V583).